Reading from the N-terminus, the 59-residue chain is MTRGNQRELARQKNMKKQSDSVKGKRRDDGLSAAARKQRDSEIMQQKQKKANEKKEEPK.

Composition is skewed to basic and acidic residues over residues 1 to 30 (MTRG…RDDG) and 50 to 59 (KANEKKEEPK). A disordered region spans residues 1 to 59 (MTRGNQRELARQKNMKKQSDSVKGKRRDDGLSAAARKQRDSEIMQQKQKKANEKKEEPK).

This sequence belongs to the SERF family.

Its function is as follows. Positive regulator of amyloid protein aggregation and proteotoxicity. Induces conformational changes in amyloid proteins, such as HTT, driving them into compact formations preceding the formation of aggregates. The protein is Small EDRK-rich factor 2 (SERF2) of Plecturocebus moloch (Dusky titi monkey).